We begin with the raw amino-acid sequence, 314 residues long: Olfactory receptor 5B3 (314 aa).

The Extracellular portion of the chain corresponds to 1 to 23; that stretch reads MENKTEVTQFILLGLTNDSELQV. N-linked (GlcNAc...) asparagine glycosylation is found at Asn3 and Asn17. A helical transmembrane segment spans residues 24-44; it reads PLFITFPFIYIITLVGNLGII. Over 45–52 the chain is Cytoplasmic; the sequence is VLIFWDSC. Residues 53-73 form a helical membrane-spanning segment; the sequence is LHNPMYFFLSNLSLVDFCYSS. Residues 74-97 lie on the Extracellular side of the membrane; sequence AVTPIVMAGFLIEDKVISYNACAA. Cys95 and Cys187 are disulfide-bonded. Residues 98–118 form a helical membrane-spanning segment; it reads QMYIFVAFATVENYLLASMAY. Residues 119–131 are Cytoplasmic-facing; the sequence is DRYAAVCKPLHYT. Residues 132–152 form a helical membrane-spanning segment; sequence TTMTTTVCARLAIGSYLCGFL. An N-linked (GlcNAc...) asparagine glycan is attached at Asn153. Residues 153–194 lie on the Extracellular side of the membrane; that stretch reads NASIHTGDTFSLSFCKSNEVHHFFCDIPAVMVLSCSDRHISE. Residues 195–215 traverse the membrane as a helical segment; that stretch reads LVLIYVVSFNIFIALLVILIS. The Cytoplasmic segment spans residues 216–235; the sequence is YTFIFITILKMHSASVYQKP. The helical transmembrane segment at 236 to 256 threads the bilayer; the sequence is LSTCASHFIAVGIFYGTIIFM. Residues 257–269 lie on the Extracellular side of the membrane; it reads YLQPSSSHSMDTD. The helical transmembrane segment at 270–290 threads the bilayer; the sequence is KMAPVFYTMVIPMLNPLVYSL. Residues 291 to 314 are Cytoplasmic-facing; it reads RNKEVKSAFKKVVEKAKLSVGWSV.

The protein belongs to the G-protein coupled receptor 1 family.

The protein localises to the cell membrane. Odorant receptor. The sequence is that of Olfactory receptor 5B3 (OR5B3) from Homo sapiens (Human).